A 670-amino-acid polypeptide reads, in one-letter code: Glycine--tRNA ligase beta subunit (670 aa).

Belongs to the class-II aminoacyl-tRNA synthetase family. Tetramer of two alpha and two beta subunits.

It is found in the cytoplasm. The catalysed reaction is tRNA(Gly) + glycine + ATP = glycyl-tRNA(Gly) + AMP + diphosphate. This Thermotoga neapolitana (strain ATCC 49049 / DSM 4359 / NBRC 107923 / NS-E) protein is Glycine--tRNA ligase beta subunit.